The primary structure comprises 254 residues: Type III pantothenate kinase (254 aa).

ATP is bound at residue 7 to 14; sequence DVGNTRLK. Substrate contacts are provided by residues Y96 and 103-106; that span reads GSDR. The active-site Proton acceptor is D105. Residue T133 coordinates ATP. T183 lines the substrate pocket.

Belongs to the type III pantothenate kinase family. As to quaternary structure, homodimer. NH4(+) serves as cofactor. It depends on K(+) as a cofactor.

It localises to the cytoplasm. It catalyses the reaction (R)-pantothenate + ATP = (R)-4'-phosphopantothenate + ADP + H(+). It participates in cofactor biosynthesis; coenzyme A biosynthesis; CoA from (R)-pantothenate: step 1/5. Its function is as follows. Catalyzes the phosphorylation of pantothenate (Pan), the first step in CoA biosynthesis. This is Type III pantothenate kinase from Paracidovorax citrulli (strain AAC00-1) (Acidovorax citrulli).